A 538-amino-acid chain; its full sequence is 2-isopropylmalate synthase (538 aa).

The Pyruvate carboxyltransferase domain maps to 6-277 (LIIFDTTLRD…DSTVPLSTID (272 aa)). Residues Asp15, His206, His208, and Asn242 each coordinate Mn(2+). The regulatory domain stretch occupies residues 406–538 (RLEQVQVSCG…AHPDAAAQKL (133 aa)).

This sequence belongs to the alpha-IPM synthase/homocitrate synthase family. LeuA type 1 subfamily. As to quaternary structure, homodimer. Requires Mn(2+) as cofactor.

Its subcellular location is the cytoplasm. The enzyme catalyses 3-methyl-2-oxobutanoate + acetyl-CoA + H2O = (2S)-2-isopropylmalate + CoA + H(+). The protein operates within amino-acid biosynthesis; L-leucine biosynthesis; L-leucine from 3-methyl-2-oxobutanoate: step 1/4. Catalyzes the condensation of the acetyl group of acetyl-CoA with 3-methyl-2-oxobutanoate (2-ketoisovalerate) to form 3-carboxy-3-hydroxy-4-methylpentanoate (2-isopropylmalate). This chain is 2-isopropylmalate synthase, found in Gloeobacter violaceus (strain ATCC 29082 / PCC 7421).